We begin with the raw amino-acid sequence, 831 residues long: Heat shock 70 kDa protein 15 (831 aa).

Disordered regions lie at residues 502–579 and 784–831; these read EEEV…KKKV and IMTK…EGST. Positions 512-526 are enriched in basic and acidic residues; it reads DQSEETAKMDTDKAS. Phosphoserine occurs at positions 533 and 536. A compositionally biased stretch (low complexity) spans 787-800; that stretch reads KPKPAAKAEAPQAK.

It belongs to the heat shock protein 70 (TC 1.A.33) family. HSP110/SSE subfamily.

The protein resides in the cytoplasm. The protein localises to the nucleus. Its function is as follows. In cooperation with other chaperones, Hsp70s are key components that facilitate folding of de novo synthesized proteins, assist translocation of precursor proteins into organelles, and are responsible for degradation of damaged protein under stress conditions. This chain is Heat shock 70 kDa protein 15 (HSP70-15), found in Arabidopsis thaliana (Mouse-ear cress).